Consider the following 279-residue polypeptide: Genome polyprotein (279 aa).

This sequence belongs to the potyviridae genome polyprotein family. Post-translationally, genome polyprotein of potyviruses undergoes post-translational proteolytic processing by the main proteinase NIa-pro resulting in the production of at least ten individual proteins. The P1 proteinase and the HC-pro cleave only their respective C-termini autocatalytically. 6K1 is essential for proper proteolytic separation of P3 from CI.

The protein resides in the virion. It catalyses the reaction RNA(n) + a ribonucleoside 5'-triphosphate = RNA(n+1) + diphosphate. Functionally, an RNA-dependent RNA polymerase that plays an essential role in the virus replication. Its function is as follows. Involved in aphid transmission, cell-to-cell and systemis movement, encapsidation of the viral RNA and in the regulation of viral RNA amplification. The chain is Genome polyprotein from Solanum betaceum (Tamarillo).